We begin with the raw amino-acid sequence, 224 residues long: Imidazoleglycerol-phosphate dehydratase (224 aa).

Belongs to the imidazoleglycerol-phosphate dehydratase family.

It carries out the reaction D-erythro-1-(imidazol-4-yl)glycerol 3-phosphate = 3-(imidazol-4-yl)-2-oxopropyl phosphate + H2O. It functions in the pathway amino-acid biosynthesis; L-histidine biosynthesis; L-histidine from 5-phospho-alpha-D-ribose 1-diphosphate: step 6/9. The polypeptide is Imidazoleglycerol-phosphate dehydratase (HIS3) (Komagataella pastoris (Yeast)).